The chain runs to 92 residues: Alpha-conotoxin FrXXA (92 aa).

Residues 1-24 (MPKLEMMLLVLLILPLSYFDSAGG) form the signal peptide. Positions 25-45 (QAVKVDGHGDGMDRYLQRDDR) are excised as a propeptide. 4 disulfide bridges follow: C63/C72, C68/C80, C73/C90, and C78/C92.

It belongs to the conotoxin D superfamily. As to quaternary structure, homodimer; disulfide-linked. The homodimer contains 10 disulfide bonds. Expressed by the venom duct.

It is found in the secreted. Its function is as follows. Alpha-conotoxins act on postsynaptic membranes, they bind to the nicotinic acetylcholine receptors (nAChR) and thus inhibit them. Through its two C-terminal domains, this homodimeric protein would bind to two nAChR allosteric sites, located outside the nAChR C-loop of the principal binding face and at the adjacent binding interface in a clockwise direction. This toxin blocks both neuronal and muscular subtypes: human alpha-7/CHRNA7, human alpha-3-beta-2 (CHRNA3-CHRNB2), human alpha-4-beta-2 (CHRNA4-CHRNB2), mouse adult muscular subtype alpha-1-beta-1-delta-epsilon (CHRNA1-CHRNB1-CHRND-CHRNE), and mouse fetal muscular subtype alpha-1-beta-1-gamma-delta (CHRNA1-CHRNB1-CHRNG-CHRND). Shows different dissociation rates towards the different subtypes, with a very slow rate towards alpha-7 subtype (almost irreversible), followed by the adult muscular subtype, the fetal muscular subtype, alpha-3-beta-2 and alpha-4-beta-2 (almost entirely reversible within a few minutes of washing). This is Alpha-conotoxin FrXXA from Conus fergusoni (Ferguson's cone).